A 1088-amino-acid chain; its full sequence is Tyrocidine synthase 1 (1088 aa).

Residues 528–602 (PPRTETESIL…QVALFVKSTT (75 aa)) enclose the Carrier domain. Ser563 bears the O-(pantetheine 4'-phosphoryl)serine mark.

This sequence belongs to the ATP-dependent AMP-binding enzyme family. Large multienzyme complex of TycA, TycB and TycC. It depends on pantetheine 4'-phosphate as a cofactor.

The catalysed reaction is L-phenylalanine + ATP + H2O = D-phenylalanine + AMP + diphosphate + H(+). It functions in the pathway antibiotic biosynthesis; tyrocidine biosynthesis. Its function is as follows. In the first step of peptide synthesis this enzyme activates phenylalanine and racemizes it to the D-isomer. The protein is Tyrocidine synthase 1 (tycA) of Brevibacillus parabrevis.